The following is a 340-amino-acid chain: Myb-related protein Zm1 (340 aa).

2 HTH myb-type domains span residues Lys11–Leu63 and Arg64–Val118. 2 DNA-binding regions (H-T-H motif) span residues Trp39–Leu63 and Trp91–Leu114. The span at Lys116–Ala126 shows a compositional bias: basic residues. Disordered regions lie at residues Lys116–Asp173 and Asp190–Thr209. The span at Ala133–Ser166 shows a compositional bias: low complexity.

It is found in the nucleus. In terms of biological role, transcription factor that positively regulates genes involved in anthocyanin biosynthesis such as A1. The polypeptide is Myb-related protein Zm1 (Zea mays (Maize)).